We begin with the raw amino-acid sequence, 172 residues long: MNVPVPPPPDGVLTGPSDSLEAGEPTPGLSDRSPDEGLIEDLALEDRAVEHLVGGLLSHYLPDLQRSKRALQELTQNQVVLLDTLEQEISKFKECHSMLDINALFTEAKHYHAKLVTIRKEMLLLHEKTSKLKKRALKLQQQRQKEELEREQQREREFEREKQLTAKPAKRT.

Positions methionine 1–aspartate 10 are enriched in pro residues. Disordered stretches follow at residues methionine 1–aspartate 35 and alanine 136–threonine 172. Over residues arginine 143–leucine 164 the composition is skewed to basic and acidic residues.

This sequence belongs to the BLOC1S6 family. Homodimer. Octamer composed of one copy each BLOC1S1, BLOC1S2, BLOC1S3, BLOC1S4, BLOC1S5, BLOC1S6, DTNBP1/BLOC1S7 and SNAPIN/BLOC1S8. The BLOC-1 complex associates with the AP-3 protein complex and membrane protein cargos. Interacts with BLOC1S4, BLOC1S5, DTNBP1/BLOC1S7, F-actin, SNAP25 isoform 1 and isoform 2, SNAP47 and STX12. Component of the biogenesis of lysosome-related organelles complex 1 (BLOC-1) composed of BLOC1S1, BLOC1S2, BLOC1S3, BLOC1S4, BLOC1S5, BLOC1S6, DTNBP1/BLOC1S7 and SNAPIN/BLOC1S8.

It localises to the cytoplasm. It is found in the membrane. Its function is as follows. Component of the BLOC-1 complex, a complex that is required for normal biogenesis of lysosome-related organelles (LRO), such as platelet dense granules and melanosomes. In concert with the AP-3 complex, the BLOC-1 complex is required to target membrane protein cargos into vesicles assembled at cell bodies for delivery into neurites and nerve terminals. The BLOC-1 complex, in association with SNARE proteins, is also proposed to be involved in neurite extension. May play a role in intracellular vesicle trafficking, particularly in the vesicle-docking and fusion process. This Rattus norvegicus (Rat) protein is Biogenesis of lysosome-related organelles complex 1 subunit 6 (Bloc1s6).